The sequence spans 180 residues: Shikimate kinase (180 aa).

Residue 14–19 coordinates ATP; it reads GAGKSC. Residue serine 18 coordinates Mg(2+). 3 residues coordinate substrate: aspartate 36, arginine 60, and glycine 82. An ATP-binding site is contributed by arginine 120. Arginine 139 provides a ligand contact to substrate.

The protein belongs to the shikimate kinase family. Monomer. Requires Mg(2+) as cofactor.

Its subcellular location is the cytoplasm. The catalysed reaction is shikimate + ATP = 3-phosphoshikimate + ADP + H(+). Its pathway is metabolic intermediate biosynthesis; chorismate biosynthesis; chorismate from D-erythrose 4-phosphate and phosphoenolpyruvate: step 5/7. Its function is as follows. Catalyzes the specific phosphorylation of the 3-hydroxyl group of shikimic acid using ATP as a cosubstrate. The chain is Shikimate kinase from Xanthomonas axonopodis pv. citri (strain 306).